We begin with the raw amino-acid sequence, 380 residues long: Chaperone protein DnaJ (380 aa).

Positions 5–69 (DFYEVLGVGR…QKKAAYDQYG (65 aa)) constitute a J domain. Residues 135 to 213 (GCSKEIRVPT…CHGQGRVEKT (79 aa)) form a CR-type zinc finger. 8 residues coordinate Zn(2+): Cys148, Cys151, Cys165, Cys168, Cys187, Cys190, Cys201, and Cys204. CXXCXGXG motif repeat units lie at residues 148 to 155 (CDSCDGSG), 165 to 172 (CGTCHGQG), 187 to 194 (CPHCHGRG), and 201 to 208 (CNSCHGQG).

It belongs to the DnaJ family. In terms of assembly, homodimer. The cofactor is Zn(2+).

The protein localises to the cytoplasm. Its function is as follows. Participates actively in the response to hyperosmotic and heat shock by preventing the aggregation of stress-denatured proteins and by disaggregating proteins, also in an autonomous, DnaK-independent fashion. Unfolded proteins bind initially to DnaJ; upon interaction with the DnaJ-bound protein, DnaK hydrolyzes its bound ATP, resulting in the formation of a stable complex. GrpE releases ADP from DnaK; ATP binding to DnaK triggers the release of the substrate protein, thus completing the reaction cycle. Several rounds of ATP-dependent interactions between DnaJ, DnaK and GrpE are required for fully efficient folding. Also involved, together with DnaK and GrpE, in the DNA replication of plasmids through activation of initiation proteins. The polypeptide is Chaperone protein DnaJ (Photobacterium profundum (strain SS9)).